The primary structure comprises 72 residues: Large ribosomal subunit protein uL29 (72 aa).

The protein belongs to the universal ribosomal protein uL29 family.

The sequence is that of Large ribosomal subunit protein uL29 from Prochlorococcus marinus subsp. pastoris (strain CCMP1986 / NIES-2087 / MED4).